A 2049-amino-acid polypeptide reads, in one-letter code: Polyunsaturated fatty acid synthase subunit B (2049 aa).

2 consecutive Ketosynthase family 3 (KS3) domains span residues 15 to 442 (EKRI…VFEE) and 468 to 908 (NMRI…LLSD). Catalysis depends on for beta-ketoacyl synthase 1 activity residues Cys196, His333, and His368. Residues 467-984 (NNMRIAITGM…LGETLAQEAD (518 aa)) are chain length factor (CLF) domain. The segment at 1044 to 1377 (RVAFMYGEGR…QRSHVTGAMD (334 aa)) is acyltransferase (AT) domain. Residues 1500-1531 (NKDNQPAVAPAATAAPTPKPKPAASSGKPVPS) are disordered. A compositionally biased stretch (low complexity) spans 1505–1531 (PAVAPAATAAPTPKPKPAASSGKPVPS). The segment at 1579–1887 (SRAFMKTYGV…SRANKLYELF (309 aa)) is enoyl reductase (ER) domain.

As to quaternary structure, component of the polyunsaturated fatty acid synthase complex composed of at least ORF-A, ORF-B and ORF-C.

Its pathway is lipid metabolism; fatty acid biosynthesis. Its function is as follows. Poliketide synthase-like protein; part of the polyunsaturated fatty acid synthase composed of the 3 PKS-like subunits A, B and C. While the saturated fatty acids (SFAs) in Thraustochytrium are produced by the conventional fatty acid synthase (FAS) pathway, polyunsaturated fatty acids (PUFAs) including docosahexeanoic acid (DHA) and docosapentaenoic acid (DPA) are synthesized via an anaerobical PKS pathway. PUFA synthase assimilates fatty acyl-CoA, the product of FAS, as the starter unit to synthesize DPA, and this starter unit may be butyryl-CoA, hexanoyl-CoA, or octanoyl-CoA. DPA and DHA biosynthesis seem to differ by the reduction at the N-3 position by PUFA synthase, not the extension of carbon chain. In DHA biosynthesis, PUFA synthase extends the fatty acyl chain from the methyl toward the carboxyl end, and the double bond is formed when the carbon chain is growing, instead of afterward. Therefore, PUFA synthase is unable to transform DPA to DHA, suggesting that DPA is not the precursor of DHA. Moreover, DPA molecule is partly extended by FAS KS domain, so DPA biosynthesis is less dependent on PUFA synthase KS domain than DHA. The polypeptide is Polyunsaturated fatty acid synthase subunit B (Thraustochytrium sp. (strain ATCC 26185 / S-3)).